A 479-amino-acid chain; its full sequence is G-rich sequence factor 1 (479 aa).

The transit peptide at 1-116 (MAGTRWVLGA…AAAAGPARGY (116 aa)) directs the protein to the mitochondrion. 2 RRM domains span residues 149–245 (YLIR…PSPV) and 249–325 (GVVR…PSRR). Position 243 is a phosphoserine (Ser243). Phosphoserine is present on Ser334. The RRM 3 domain occupies 400 to 479 (HFVHMRGLPF…LFLNSCPKGK (80 aa)).

Monomer. Found in a complex with DDX28, DHX30, FASTKD2 and FASTKD5. Interacts with the mitochondrial RNase P complex subunit TRMT10C/MRPP1. Interacts with the 2 components of the mitochondrial degradosome complex, PNPT1 and SUPV3L1, in an RNA-dependent manner.

Its subcellular location is the mitochondrion matrix. Functionally, regulator of post-transcriptional mitochondrial gene expression, required for assembly of the mitochondrial ribosome and for recruitment of mRNA and lncRNA. Binds RNAs containing the 14 base G-rich element. Preferentially binds RNAs transcribed from three contiguous genes on the light strand of mtDNA, the ND6 mRNA, and the long non-coding RNAs for MT-CYB and MT-ND5, each of which contains multiple consensus binding sequences. Involved in the degradosome-mediated decay of non-coding mitochondrial transcripts (MT-ncRNA) and tRNA-like molecules. Acts by unwinding G-quadruplex RNA structures in MT-ncRNA, thus facilitating their degradation by the degradosome. G-quadruplexes (G4) are non-canonical 4 stranded structures formed by transcripts from the light strand of mtDNA. This Mus musculus (Mouse) protein is G-rich sequence factor 1 (Grsf1).